The primary structure comprises 619 residues: DNA mismatch repair protein MutL (619 aa).

The disordered stretch occupies residues 339-400; the sequence is AEKDDPPAPR…GGASWPHAQP (62 aa).

This sequence belongs to the DNA mismatch repair MutL/HexB family.

This protein is involved in the repair of mismatches in DNA. It is required for dam-dependent methyl-directed DNA mismatch repair. May act as a 'molecular matchmaker', a protein that promotes the formation of a stable complex between two or more DNA-binding proteins in an ATP-dependent manner without itself being part of a final effector complex. This is DNA mismatch repair protein MutL from Klebsiella pneumoniae subsp. pneumoniae (strain ATCC 700721 / MGH 78578).